The sequence spans 503 residues: Cytochrome P450 3A9 (503 aa).

Residue Cys442 coordinates heme.

It belongs to the cytochrome P450 family. It depends on heme as a cofactor. In terms of tissue distribution, mainly expressed in olfactory epithelium.

It localises to the endoplasmic reticulum membrane. The protein localises to the microsome membrane. The catalysed reaction is an organic molecule + reduced [NADPH--hemoprotein reductase] + O2 = an alcohol + oxidized [NADPH--hemoprotein reductase] + H2O + H(+). Functionally, this isozyme seems to be implicated in olfaction. Active in the demethylation of erythromycin as well as benzphetamine. This chain is Cytochrome P450 3A9 (Cyp3a9), found in Rattus norvegicus (Rat).